The chain runs to 600 residues: Protein GPR107 (600 aa).

Positions 1 to 39 (MAALAPVGSPASRGPRLAAGLRLLPMLGLLQLLAEPGLG) are cleaved as a signal peptide. Residues 40-263 (RVHHLALKDD…YLSAGEIPLP (224 aa)) lie on the Extracellular side of the membrane. N-linked (GlcNAc...) asparagine glycans are attached at residues Asn70 and Asn169. A disulfide bond links Cys109 and Cys228. A compositionally biased stretch (polar residues) spans 157-175 (SQEPNVNPASAGNQTQKTQ). The tract at residues 157–185 (SQEPNVNPASAGNQTQKTQDGGKSKRSTV) is disordered. Positions 176 to 185 (DGGKSKRSTV) are enriched in basic and acidic residues. A glycan (N-linked (GlcNAc...) asparagine) is linked at Asn211. A helical membrane pass occupies residues 264-284 (KLYISMAFFFFLSGTIWIHIL). Topologically, residues 285 to 293 (RKRRNDVFK) are cytoplasmic. A helical transmembrane segment spans residues 294–314 (IHWLMAALPFTKSLSLVFHAI). Residues 315 to 337 (DYHYISSQGFPIEGWAVVYYITH) are Extracellular-facing. Residues 338–358 (LLKGALLFITIALIGTGWAFI) form a helical membrane-spanning segment. Topologically, residues 359 to 368 (KHILSDKDKK) are cytoplasmic. The helical transmembrane segment at 369-389 (IFMIVIPLQVLANVAYIIIES) threads the bilayer. The Extracellular segment spans residues 390–402 (TEEGTTEYGLWKD). A helical transmembrane segment spans residues 403–423 (SLFLVDLLCCGAILFPVVWSI). Topologically, residues 424–498 (RHLQEASATD…AKLKLFRHYY (75 aa)) are cytoplasmic. The helical transmembrane segment at 499–519 (VLIVCYIYFTRIIAFLLKLAV) threads the bilayer. The Extracellular portion of the chain corresponds to 520–524 (PFQWK). A helical membrane pass occupies residues 525-544 (WLYQLLDETATLVFFVLTGY). Over 545 to 600 (KFRPASDNPYLQLSQEEEDLEMESVVTTSGVMESMKKVKKVTNGSVEPQGEWEGAV) the chain is Cytoplasmic.

Belongs to the LU7TM family. In terms of processing, cleaved by FURIN to yield two fragments of 17 and 35 kDa that remain associated via a disulfide bond.

It localises to the cell membrane. Its subcellular location is the golgi apparatus. The protein localises to the trans-Golgi network membrane. Has been proposed to act as a receptor for neuronostatin, a peptide derived from the somatostatin/SST precursor. Involved in blood sugar regulation through the induction of glucagon in response to low glucose. Its function is as follows. (Microbial infection) Required for intoxication by Pseudomonas aeruginosa exotoxin A and Campylobacter jejuni CDT. May contribute to the retrograde transport of bacterial toxins, including cholera toxin, from the trans-Golgi network to the endoplasmic reticulum. The sequence is that of Protein GPR107 (GPR107) from Homo sapiens (Human).